The primary structure comprises 444 residues: Structure-specific endonuclease subunit SLX1 (444 aa).

The GIY-YIG domain maps to 23 to 105 (AFSCCYLLRS…QNTKVSRHAD (83 aa)). An SLX1-type zinc finger spans residues 240-295 (CGVCKQRLILQHDIIAVCSHSSCHCAAHLSCLSSHFLKDKDSDSELVPREGTCPTC). Residues 324–354 (RRQRAGTPKGQGLKSVRGRGHSEDENESDAL) form a disordered region.

It belongs to the SLX1 family. Forms a heterodimer with SLX4. A divalent metal cation serves as cofactor.

It is found in the nucleus. Functionally, catalytic subunit of the SLX1-SLX4 structure-specific endonuclease that resolves DNA secondary structures generated during DNA repair and recombination. Has endonuclease activity towards branched DNA substrates, introducing single-strand cuts in duplex DNA close to junctions with ss-DNA. This is Structure-specific endonuclease subunit SLX1 from Paracoccidioides lutzii (strain ATCC MYA-826 / Pb01) (Paracoccidioides brasiliensis).